Consider the following 348-residue polypeptide: Transmembrane protease serine 12 (348 aa).

An N-terminal signal peptide occupies residues 1-20; the sequence is MRLGLLSVALLFVGSSHLYS. Topologically, residues 21-324 are extracellular; it reads DHYSPSGRHR…EHFFHASTQG (304 aa). Positions 24-46 are disordered; the sequence is SPSGRHRLGPSPEPAASSQQAEA. A Peptidase S1 domain is found at 78–318; that stretch reads IIGGTEAQAG…YQKWLTEHFF (241 aa). A disulfide bridge connects residues cysteine 107 and cysteine 123. Active-site charge relay system residues include histidine 122 and aspartate 171. 3 cysteine pairs are disulfide-bonded: cysteine 206/cysteine 274, cysteine 237/cysteine 253, and cysteine 264/cysteine 294. N-linked (GlcNAc...) asparagine glycosylation is found at asparagine 219 and asparagine 249. Residue serine 268 is the Charge relay system of the active site. Residues 325 to 345 form a helical membrane-spanning segment; the sequence is ILTINILRGQILIALCFVILL. Residues 346–348 are Cytoplasmic-facing; it reads ATT.

The protein belongs to the peptidase S1 family. As to expression, in testis, expressed in spermatocytes and spermatids (at protein level).

The protein resides in the cell membrane. Its subcellular location is the cytoplasmic vesicle. It is found in the secretory vesicle. It localises to the acrosome. Its function is as follows. Required for male fertility. Plays a critical role in sperm capacitation and acrosome reactions during fertilization, and also plays a role in the regulation of proteins involved in spermatogenesis. Regulates protein pathways that promote chromosomal synapsis formation, double-strand break repair, formation of the inner mitochondrial membrane cristae and apoptosis in developing sperm. Required for normal sperm motility and binding to the zona pellucida, potentially via a role in ADAM3 protein maturation. This chain is Transmembrane protease serine 12, found in Homo sapiens (Human).